A 72-amino-acid chain; its full sequence is Small ribosomal subunit protein bS18c (72 aa).

Belongs to the bacterial ribosomal protein bS18 family. As to quaternary structure, part of the 30S ribosomal subunit.

Its subcellular location is the plastid. The protein resides in the chloroplast. The chain is Small ribosomal subunit protein bS18c from Phaeodactylum tricornutum (strain CCAP 1055/1).